A 263-amino-acid polypeptide reads, in one-letter code: Palmitoyltransferase ZDHHC22 (263 aa).

Residues 1–9 (MLALRLLNV) are Cytoplasmic-facing. The helical transmembrane segment at 10–30 (VAPAYFLCISLVTFVLQLFLF) threads the bilayer. The Lumenal portion of the chain corresponds to 31–47 (LPSMREDPTATPLFSPA). A helical transmembrane segment spans residues 48–68 (VLHGALFLFLSANALGNYILV). Residues 69 to 125 (VQNSPDDLGACQGTSSQRPQRPPPSTHFCRVCARVTLRHDHHCFFTGNCIGSRNMRN) are Cytoplasmic-facing. One can recognise a DHHC domain in the interval 91–131 (PPSTHFCRVCARVTLRHDHHCFFTGNCIGSRNMRNFILFCL). The active-site S-palmitoyl cysteine intermediate is the Cys-111. Transmembrane regions (helical) follow at residues 126–146 (FILF…AGVA) and 147–167 (YISA…TLLP). Over 168–182 (TSISQFFSGAVLGSD) the chain is Cytoplasmic. The chain crosses the membrane as a helical span at residues 183-203 (MFVILMLYLWFAVGLACAGFC). Over 204 to 263 (CHQLLLILRGQTRYQVRKGVAVRARPWRKNLQEVFGKRWLLGLLVPMFNVGTESSKQQDK) the chain is Lumenal.

The protein belongs to the DHHC palmitoyltransferase family. Interacts with CNN3.

The protein resides in the endoplasmic reticulum membrane. Its subcellular location is the golgi apparatus membrane. The enzyme catalyses L-cysteinyl-[protein] + hexadecanoyl-CoA = S-hexadecanoyl-L-cysteinyl-[protein] + CoA. In terms of biological role, palmitoyltransferase that could catalyze the addition of palmitate onto various protein substrates and be involved in a variety of cellular processes. Catalyzes the palmitoylation of KCNMA1, regulating localization of KCNMA1 to the plasma membrane. Might also mediate palmitoylation of CNN3. This is Palmitoyltransferase ZDHHC22 from Rattus norvegicus (Rat).